We begin with the raw amino-acid sequence, 1437 residues long: MMDTSKDDDMEIASSSGSRRYDVFPSFRGEDVRDSFLSHLLKELRGKAITFIDDEIERSRSIGPELLSAIKESRIAIVIFSKNYASSTWCLNELVEIHKCYTNLNQMVIPIFFHVDASEVKKQTGEFGKVFEETCKAKSEDEKQSWKQALAAVAVMAGYDLRKWPSEAAMIEELAEDVLRKTMTPSDDFGDLVGIENHIEAIKSVLCLESKEARIMVGIWGQSGIGKSTIGRALYSKLSIQFHHRAFITYKSTSGSDVSGMKLRWEKELLSEILGQKDIKIEHFGVVEQRLKQQKVLILLDDVDSLEFLKTLVGKAEWFGSGSRIIVITQDRQLLKAHEIDLIYEVEFPSEHLALTMLCRSAFGKDSPPDDFKELAFEVAKLAGNLPLGLSVLGSSLKGRTKEWWMEMMPRLRNGLNGDIMKTLRVSYDRLHQKDQDMFLYIACLFNGFEVSYVKDLLKDNVGFTMLTEKSLIRITPDGYIEMHNLLEKLGREIDRAKSKGNPGKRRFLTNFEDIHEVVTEKTGTETLLGIRLPFEEYFSTRPLLIDKESFKGMRNLQYLEIGYYGDLPQSLVYLPLKLRLLDWDDCPLKSLPSTFKAEYLVNLIMKYSKLEKLWEGTLPLGSLKEMNLRYSNNLKEIPDLSLAINLEELDLVGCKSLVTLPSSIQNATKLIYLDMSDCKKLESFPTDLNLESLEYLNLTGCPNLRNFPAIKMGCSDVDFPEGRNEIVVEDCFWNKNLPAGLDYLDCLTRCMPCEFRPEQLAFLNVRGYKHEKLWEGIQSLGSLEGMDLSESENLTEIPDLSKATKLESLILNNCKSLVTLPSTIGNLHRLVRLEMKECTGLEVLPTDVNLSSLETLDLSGCSSLRSFPLISTNIVWLYLENTAIEEIPSTIGNLHRLVRLEMKKCTGLEVLPTDVNLSSLETLDLSGCSSLRSFPLISESIKWLYLENTAIEEIPDLSKATNLKNLKLNNCKSLVTLPTTIGNLQKLVSFEMKECTGLEVLPIDVNLSSLMILDLSGCSSLRTFPLISTNIVWLYLENTAIEEIPSTIGNLHRLVKLEMKECTGLEVLPTDVNLSSLMILDLSGCSSLRTFPLISTRIECLYLQNTAIEEVPCCIEDFTRLTVLMMYCCQRLKTISPNIFRLTRLELADFTDCRGVIKALSDATVVATMEDHVSCVPLSENIEYIWDKLYRVAYLQEHFSFRNCFKLDRDARELILRSCFKPVALPGEEIPKYFTYRAYGDSLTVIVPQSSLSQNFLRFKACVVVEPLSKGKGFYPFLKVNVGFNGKQYQKSFSKDAELELCKTDHLFFCSFKFRSEDLPSKLNFNDVEFKFCCSNRIKECGVRLMYVSQEENNQQTTRSEKRMRMTSGTSEEDINLPYGLIVADTGLAALNMELSLGQGEPSSSTSLEGEALCVDYMITEEQDKGIPILFPVSGN.

Met-1 carries the post-translational modification N-acetylmethionine. The TIR domain maps to 19–182 (RRYDVFPSFR…ELAEDVLRKT (164 aa)). 28-33 (RGEDVR) contributes to the NAD(+) binding site. Glu-93 is a catalytic residue. LRR repeat units follow at residues 554–576 (MRNLQYLEIGYYGDLPQSLVYLP), 577–598 (LKLRLLDWDDCPLKSLPSTFKA), 600–621 (YLVNLIMKYSKLEKLWEGTLPL), 622–645 (GSLKEMNLRYSNNLKEIPDLSLAI), 647–668 (LEELDLVGCKSLVTLPSSIQNA), 670–691 (KLIYLDMSDCKKLESFPTDLNL), 692–715 (ESLEYLNLTGCPNLRNFPAIKMGC), 781–805 (LGSLEGMDLSESENLTEIPDLSKAT), 807–828 (LESLILNNCKSLVTLPSTIGNL), 829–851 (HRLVRLEMKECTGLEVLPTDVNL), 852–875 (SSLETLDLSGCSSLRSFPLISTNI), 877–895 (WLYLENTAIEEIPSTIGNL), 897–918 (RLVRLEMKKCTGLEVLPTDVNL), 919–939 (SSLETLDLSGCSSLRSFPLIS), 940–962 (ESIKWLYLENTAIEEIPDLSKAT), 964–985 (LKNLKLNNCKSLVTLPTTIGNL), 1009–1029 (SSLMILDLSGCSSLRTFPLIS), 1030–1052 (TNIVWLYLENTAIEEIPSTIGNL), 1054–1075 (RLVKLEMKECTGLEVLPTDVNL), 1076–1096 (SSLMILDLSGCSSLRTFPLIS), 1097–1121 (TRIECLYLQNTAIEEVPCCIEDFTR), 1123–1143 (TVLMMYCCQRLKTISPNIFRL), and 1161–1185 (LSDATVVATMEDHVSCVPLSENIEY).

This sequence belongs to the disease resistance TIR-NB-LRR family. As to quaternary structure, homodimer. Interacts (via TIR domain) with TPR1. Interacts with EDS1. Interacts with SRFR1. Interacts with HSP90-3. Binds to MORC1/CRT1. Interacts with TRAF1B. Post-translationally, met-1 is specifically acetylated by N-terminal acetyltransferase complex A (NatA). The NatA-mediated acetylation serves as a degradation signal. In terms of processing, met-1 is specifically acetylated by N-terminal acetyltransferase complex B (NatB). The NatB-mediated acetylation stabilizes SNC1. Expressed in guard cells and epidermal cells, but not detected in mesophyll cells.

Its subcellular location is the cytoplasm. The protein resides in the microsome. It localises to the nucleus. The catalysed reaction is NAD(+) + H2O = ADP-D-ribose + nicotinamide + H(+). In terms of biological role, disease resistance protein of the TIR-NB-LRR-type. Part of the RPP5 locus that contains a cluster of several paralogous disease resistance (R) genes. Resistance proteins guard the plant against pathogens that contain an appropriate avirulence protein via an indirect interaction with this avirulence protein. That triggers a defense system including the hypersensitive response, which restricts the pathogen growth. Probably acts as a NAD(+) hydrolase (NADase): in response to activation, catalyzes cleavage of NAD(+) into ADP-D-ribose (ADPR) and nicotinamide; NAD(+) cleavage triggering a defense system that promotes cell death. Expression regulated by MOS1 at chromatin level. Nuclear localization of SNC1 is essential for its activity. ABA deficiency can rescue high-temperature inhibition of SNC1-mediated defense responses. The polypeptide is Protein SUPPRESSOR OF npr1-1, CONSTITUTIVE 1 (Arabidopsis thaliana (Mouse-ear cress)).